A 636-amino-acid polypeptide reads, in one-letter code: Iron transport multicopper oxidase FET3 (636 aa).

Positions 1–21 are cleaved as a signal peptide; it reads MTNALLSIAVLLFSMLSLAQA. Topologically, residues 22–559 are extracellular; the sequence is ETHTFNWTTG…AFIPTGFTKK (538 aa). N-linked (GlcNAc...) asparagine glycans are attached at residues N27, N74, and N77. Plastocyanin-like domains follow at residues 32–146 and 157–301; these read WDYR…IKDD and SLSL…VYNK. Cu cation contacts are provided by H81 and H83. N88 and N113 each carry an N-linked (GlcNAc...) asparagine glycan. Cu cation contacts are provided by H126 and H128. Residues N194, N198, N244, N265, N292, N300, N359, and N381 are each glycosylated (N-linked (GlcNAc...) asparagine). One can recognise a Plastocyanin-like 3 domain in the interval 362-502; that stretch reads YTAPKVPTLM…GLGLVLVEDP (141 aa). Cu cation-binding residues include H413, H416, H418, H483, C484, H485, and H489. Residues 560-584 traverse the membrane as a helical segment; that stretch reads GIIAMTFSCFAGILGIITIAIYGMM. At 585–636 the chain is on the cytoplasmic side; the sequence is DMEDATEKVIRDLHVDPEVLLNEVDENEERQVNEDRHSTEKHQFLTKAKRFF.

Belongs to the multicopper oxidase family. The cofactor is Cu cation.

The protein resides in the cell membrane. It catalyses the reaction 4 Fe(2+) + O2 + 4 H(+) = 4 Fe(3+) + 2 H2O. It carries out the reaction 4 Cu(+) + O2 + 4 H(+) = 4 Cu(2+) + 2 H2O. Its function is as follows. Iron transport multicopper ferroxidase required for Fe(2+) ion high affinity uptake. Required to oxidize Fe(2+) to Fe(3+), which is then transported into the cell via the ferric iron permease FTR1. Essential component of copper-dependent iron transport. Also has cuprous oxidase activity. This chain is Iron transport multicopper oxidase FET3 (FET3), found in Saccharomyces cerevisiae (strain ATCC 204508 / S288c) (Baker's yeast).